Consider the following 239-residue polypeptide: tRNA (guanine-N(7)-)-methyltransferase (239 aa).

Positions 69, 94, 121, and 144 each coordinate S-adenosyl-L-methionine. The active site involves aspartate 144. Lysine 148 provides a ligand contact to substrate. The interaction with RNA stretch occupies residues 150–155 (RHNKRR). Substrate-binding positions include aspartate 180 and 217–220 (TKFE).

Belongs to the class I-like SAM-binding methyltransferase superfamily. TrmB family. Monomer.

It carries out the reaction guanosine(46) in tRNA + S-adenosyl-L-methionine = N(7)-methylguanosine(46) in tRNA + S-adenosyl-L-homocysteine. Its pathway is tRNA modification; N(7)-methylguanine-tRNA biosynthesis. Catalyzes the formation of N(7)-methylguanine at position 46 (m7G46) in tRNA. The polypeptide is tRNA (guanine-N(7)-)-methyltransferase (Yersinia pseudotuberculosis serotype I (strain IP32953)).